Consider the following 356-residue polypeptide: Phosphoserine aminotransferase (356 aa).

Arg-41 is a binding site for L-glutamate. Pyridoxal 5'-phosphate contacts are provided by residues 75-76 (AS), Trp-99, Thr-147, Asp-166, and Gln-189. Residue Lys-190 is modified to N6-(pyridoxal phosphate)lysine. 231–232 (NT) contacts pyridoxal 5'-phosphate.

This sequence belongs to the class-V pyridoxal-phosphate-dependent aminotransferase family. SerC subfamily. Homodimer. The cofactor is pyridoxal 5'-phosphate.

It localises to the cytoplasm. The enzyme catalyses O-phospho-L-serine + 2-oxoglutarate = 3-phosphooxypyruvate + L-glutamate. It carries out the reaction 4-(phosphooxy)-L-threonine + 2-oxoglutarate = (R)-3-hydroxy-2-oxo-4-phosphooxybutanoate + L-glutamate. The protein operates within amino-acid biosynthesis; L-serine biosynthesis; L-serine from 3-phospho-D-glycerate: step 2/3. It participates in cofactor biosynthesis; pyridoxine 5'-phosphate biosynthesis; pyridoxine 5'-phosphate from D-erythrose 4-phosphate: step 3/5. In terms of biological role, catalyzes the reversible conversion of 3-phosphohydroxypyruvate to phosphoserine and of 3-hydroxy-2-oxo-4-phosphonooxybutanoate to phosphohydroxythreonine. This Phocaeicola vulgatus (strain ATCC 8482 / DSM 1447 / JCM 5826 / CCUG 4940 / NBRC 14291 / NCTC 11154) (Bacteroides vulgatus) protein is Phosphoserine aminotransferase.